Consider the following 706-residue polypeptide: Fatty acid oxidation complex subunit alpha (706 aa).

Residues 1–188 (MEKTFNLTRR…KMGLVNDVVP (188 aa)) are enoyl-CoA hydratase. Residues 308-706 (RKVKKAVILG…TMARENVSFF (399 aa)) are 3-hydroxyacyl-CoA dehydrogenase.

In the N-terminal section; belongs to the enoyl-CoA hydratase/isomerase family. It in the central section; belongs to the 3-hydroxyacyl-CoA dehydrogenase family. As to quaternary structure, heterotetramer of two alpha chains (FadJ) and two beta chains (FadI).

It localises to the cytoplasm. The enzyme catalyses a (3S)-3-hydroxyacyl-CoA = a (2E)-enoyl-CoA + H2O. It catalyses the reaction a 4-saturated-(3S)-3-hydroxyacyl-CoA = a (3E)-enoyl-CoA + H2O. It carries out the reaction a (3S)-3-hydroxyacyl-CoA + NAD(+) = a 3-oxoacyl-CoA + NADH + H(+). The catalysed reaction is (3S)-3-hydroxybutanoyl-CoA = (3R)-3-hydroxybutanoyl-CoA. Its pathway is lipid metabolism; fatty acid beta-oxidation. Catalyzes the formation of a hydroxyacyl-CoA by addition of water on enoyl-CoA. Also exhibits 3-hydroxyacyl-CoA epimerase and 3-hydroxyacyl-CoA dehydrogenase activities. The chain is Fatty acid oxidation complex subunit alpha from Shewanella sp. (strain W3-18-1).